A 165-amino-acid polypeptide reads, in one-letter code: Ubiquitin-fold modifier-conjugating enzyme 1 (165 aa).

Cysteine 116 serves as the catalytic Glycyl thioester intermediate.

The protein belongs to the ubiquitin-conjugating enzyme family. UFC1 subfamily.

In terms of biological role, E2-like enzyme which forms an intermediate with UFM1 via a thioester linkage. This chain is Ubiquitin-fold modifier-conjugating enzyme 1, found in Drosophila virilis (Fruit fly).